Consider the following 633-residue polypeptide: DNA repair protein XRCC1 (633 aa).

Residue Ser-140 is modified to Phosphoserine. Residue Lys-176 forms a Glycyl lysine isopeptide (Lys-Gly) (interchain with G-Cter in SUMO1); alternate linkage. Lys-176 is covalently cross-linked (Glycyl lysine isopeptide (Lys-Gly) (interchain with G-Cter in SUMO2); alternate). Position 198 is a phosphothreonine (Thr-198). A Phosphoserine modification is found at Ser-199. Thr-202 carries the phosphothreonine modification. 3 positions are modified to phosphoserine: Ser-204, Ser-226, and Ser-241. The span at Ala-221 to Ala-231 shows a compositional bias: low complexity. The tract at residues Ala-221 to Pro-313 is disordered. Over residues Glu-240 to Thr-257 the composition is skewed to basic and acidic residues. At Thr-257 the chain carries Phosphothreonine. A phosphoserine mark is found at Ser-259 and Ser-266. A compositionally biased stretch (low complexity) spans Ala-277–Ala-291. Thr-281 is subject to Phosphothreonine. Residues Pro-299–Pro-313 show a composition bias toward basic and acidic residues. A BRCT 1 domain is found at Glu-315–Met-403. A Phosphoserine; by PRKDC modification is found at Ser-371. 3 disordered regions span residues Arg-400–Pro-462, Glu-471–Asp-490, and Gln-498–Val-536. Phosphoserine occurs at positions 408, 409, 410, and 421. The segment covering Lys-427–Ala-443 has biased composition (low complexity). A phosphoserine mark is found at Ser-446 and Ser-447. Thr-453 and Thr-457 each carry phosphothreonine. Phosphoserine is present on residues Ser-461 and Ser-485. Over residues Gly-481 to Asp-490 the composition is skewed to acidic residues. A Phosphothreonine modification is found at Thr-488. Ser-518 carries the phosphoserine modification. A phosphothreonine mark is found at Thr-519 and Thr-523. Positions Glu-538 to Val-629 constitute a BRCT 2 domain.

As to quaternary structure, homodimer. Interacts with polynucleotide kinase (PNK), DNA polymerase-beta (POLB) and DNA ligase III (LIG3). Interacts with APTX and APLF. Interacts with APEX1; the interaction is induced by SIRT1 and increases with the acetylated form of APEX1. Interacts with (poly-ADP-ribosylated) PARP1. Post-translationally, phosphorylation of Ser-371 causes dimer dissociation. Phosphorylation by CK2 promotes interaction with APTX and APLF. In terms of processing, sumoylated. As to expression, expressed in fibroblasts, retinal pigmented epithelial cells and lymphoblastoid cells (at protein level).

Its subcellular location is the nucleus. It is found in the chromosome. Its function is as follows. Scaffold protein involved in DNA single-strand break repair by mediating the assembly of DNA break repair protein complexes. Negatively regulates ADP-ribosyltransferase activity of PARP1 during base-excision repair in order to prevent excessive PARP1 activity. Recognizes and binds poly-ADP-ribose chains: specifically binds auto-poly-ADP-ribosylated PARP1, limiting its activity. The polypeptide is DNA repair protein XRCC1 (Homo sapiens (Human)).